The primary structure comprises 98 residues: NADH-ubiquinone oxidoreductase chain 4L (98 aa).

3 consecutive transmembrane segments (helical) span residues 1–21, 29–49, and 61–81; these read MSMM…GLLM, SLLC…VTIL, and IILL…LVMV.

The protein belongs to the complex I subunit 4L family. In terms of assembly, core subunit of respiratory chain NADH dehydrogenase (Complex I) which is composed of 45 different subunits.

It is found in the mitochondrion inner membrane. It carries out the reaction a ubiquinone + NADH + 5 H(+)(in) = a ubiquinol + NAD(+) + 4 H(+)(out). Its function is as follows. Core subunit of the mitochondrial membrane respiratory chain NADH dehydrogenase (Complex I) which catalyzes electron transfer from NADH through the respiratory chain, using ubiquinone as an electron acceptor. Part of the enzyme membrane arm which is embedded in the lipid bilayer and involved in proton translocation. This is NADH-ubiquinone oxidoreductase chain 4L (MT-ND4L) from Zalophus californianus (California sealion).